Consider the following 342-residue polypeptide: Fatty acid desaturase 6 (342 aa).

Helical transmembrane passes span 39 to 59 and 63 to 83; these read GVDC…FLCL and SPLV…TLTV. Positions 87-91 match the Histidine box-1 motif; it reads HLATH. A Histidine box-2 motif is present at residues 124–128; it reads HVKMH. The next 2 membrane-spanning stretches (helical) occupy residues 151–171 and 185–205; these read YVYM…VAVE and LGLI…VSGF. A Histidine box-3 motif is present at residues 277–281; it reads HVEHH.

The protein belongs to the fatty acid desaturase type 1 family.

The protein resides in the membrane. The protein operates within lipid metabolism; fatty acid metabolism. This Bos taurus (Bovine) protein is Fatty acid desaturase 6 (FADS6).